We begin with the raw amino-acid sequence, 459 residues long: Cysteine--tRNA ligase (459 aa).

Position 28 (C28) interacts with Zn(2+). The short motif at 30 to 40 is the 'HIGH' region element; the sequence is ITVYDLCHVGH. Zn(2+) is bound by residues C209, H234, and E238. The 'KMSKS' region signature appears at 266-270; the sequence is KMSKS. ATP is bound at residue K269.

This sequence belongs to the class-I aminoacyl-tRNA synthetase family. Monomer. The cofactor is Zn(2+).

The protein resides in the cytoplasm. The catalysed reaction is tRNA(Cys) + L-cysteine + ATP = L-cysteinyl-tRNA(Cys) + AMP + diphosphate. In Pasteurella multocida (strain Pm70), this protein is Cysteine--tRNA ligase (cysS).